The primary structure comprises 328 residues: Putative GDP-L-fucose synthase 2 (328 aa).

At Ala2 the chain carries N-acetylalanine. NADP(+) is bound at residue 26 to 32 (GHRGLVG). The Proton donor/acceptor role is filled by Tyr152. NADP(+)-binding positions include Lys156, 179–182 (PTNL), and His195. Substrate contacts are provided by Arg203, Trp218, Arg225, and Asp285.

The protein belongs to the NAD(P)-dependent epimerase/dehydratase family. Fucose synthase subfamily. In terms of assembly, homodimer.

The catalysed reaction is GDP-beta-L-fucose + NADP(+) = GDP-4-dehydro-alpha-D-rhamnose + NADPH + H(+). It participates in nucleotide-sugar biosynthesis; GDP-L-fucose biosynthesis via de novo pathway; GDP-L-fucose from GDP-alpha-D-mannose: step 2/2. In terms of biological role, catalyzes the two-step NADP-dependent conversion of GDP-4-dehydro-6-deoxy-D-mannose to GDP-fucose, involving an epimerase and a reductase reaction. The polypeptide is Putative GDP-L-fucose synthase 2 (GER2) (Arabidopsis thaliana (Mouse-ear cress)).